A 227-amino-acid chain; its full sequence is MSVVPPNRSQTGWPRGVTQFGNKYIQQTKPLTLERTINLYPLTNYTFGTKEPLYEKDSSVAARFQRMREEFDKIGMRRTVEGVLIVHEHRLPHVLLLQLGTTFFKLPGGELNPGEDEVEGLKRLMTEILGRQDGVLQDWVIDDCIGNWWRPNFEPPQYPYIPAHITKPKEHKKLFLVQLQEKALFAVPKNYKLVAAPLFELYDNAPGYGPIISSLPQLLSRFNFIYN.

Position 2 is an N-acetylserine (serine 2). The interval 2-147 (SVVPPNRSQT…DWVIDDCIGN (146 aa)) is necessary for RNA-binding. An Omega-N-methylarginine modification is found at arginine 15. N6-acetyllysine is present on residues lysine 23 and lysine 29. Tyrosine 40 carries the phosphotyrosine modification. Lysine 56 bears the N6-acetyllysine mark. The region spanning 76-201 (MRRTVEGVLI…KLVAAPLFEL (126 aa)) is the Nudix hydrolase domain. Positions 81–160 (EGVLIVHEHR…PNFEPPQYPY (80 aa)) are necessary for interactions with PAPOLA and PABPN1. The interaction with RNA stretch occupies residues 102–104 (TFF). A Nudix box motif is present at residues 109-130 (GELNPGEDEVEGLKRLMTEILG).

The protein belongs to the Nudix hydrolase family. CPSF5 subfamily. In terms of assembly, homodimer (via N- and C-terminus); binds RNA as homodimer. Component of the cleavage factor Im (CFIm) complex which is a heterotetramer composed of two subunits of NUDT21/CPSF5 and two subunits of CPSF6 or CPSF7 or a heterodimer of CPSF6 and CPSF7. The cleavage factor Im (CFIm) complex associates with the CPSF and CSTF complexes to promote the assembly of the core mRNA 3'-processing machinery. Interacts with CPSF6 (via the RRM domain); this interaction is direct and enhances binding to RNA. Interacts with CPSF7. Interacts with FIP1L1; this interaction occurs in a RNA sequence-specific manner. Interacts with PABPN1. Interacts (via N-terminus) with PAPOLA (via C-terminus); this interaction is direct and diminished by acetylation. Interacts with SNRNP70. Interacts with VIRMA. Post-translationally, acetylated mainly by p300/CBP, recruited to the complex by CPSF6. Acetylation decreases interaction with PAPAO. Deacetylated by the class I/II HDACs, HDAC1, HDAC3 and HDAC10, and by the class III HDACs, SIRT1 and SIRT2.

The protein localises to the nucleus. It localises to the cytoplasm. Component of the cleavage factor Im (CFIm) complex that functions as an activator of the pre-mRNA 3'-end cleavage and polyadenylation processing required for the maturation of pre-mRNA into functional mRNAs. CFIm contributes to the recruitment of multiprotein complexes on specific sequences on the pre-mRNA 3'-end, so called cleavage and polyadenylation signals (pA signals). Most pre-mRNAs contain multiple pA signals, resulting in alternative cleavage and polyadenylation (APA) producing mRNAs with variable 3'-end formation. The CFIm complex acts as a key regulator of cleavage and polyadenylation site choice during APA through its binding to 5'-UGUA-3' elements localized in the 3'-untranslated region (UTR) for a huge number of pre-mRNAs. NUDT21/CPSF5 activates indirectly the mRNA 3'-processing machinery by recruiting CPSF6 and/or CPSF7. Binds to 5'-UGUA-3' elements localized upstream of pA signals that act as enhancers of pre-mRNA 3'-end processing. The homodimer mediates simultaneous sequence-specific recognition of two 5'-UGUA-3' elements within the pre-mRNA. Plays a role in somatic cell fate transitions and pluripotency by regulating widespread changes in gene expression through an APA-dependent function. Binds to chromatin. Binds to, but does not hydrolyze mono- and di-adenosine nucleotides. The protein is Cleavage and polyadenylation specificity factor subunit 5 (NUDT21) of Bos taurus (Bovine).